Here is a 346-residue protein sequence, read N- to C-terminus: UDP-3-O-acylglucosamine N-acyltransferase (346 aa).

Histidine 253 functions as the Proton acceptor in the catalytic mechanism.

Belongs to the transferase hexapeptide repeat family. LpxD subfamily. As to quaternary structure, homotrimer.

It catalyses the reaction a UDP-3-O-[(3R)-3-hydroxyacyl]-alpha-D-glucosamine + a (3R)-hydroxyacyl-[ACP] = a UDP-2-N,3-O-bis[(3R)-3-hydroxyacyl]-alpha-D-glucosamine + holo-[ACP] + H(+). Its pathway is bacterial outer membrane biogenesis; LPS lipid A biosynthesis. In terms of biological role, catalyzes the N-acylation of UDP-3-O-acylglucosamine using 3-hydroxyacyl-ACP as the acyl donor. Is involved in the biosynthesis of lipid A, a phosphorylated glycolipid that anchors the lipopolysaccharide to the outer membrane of the cell. The protein is UDP-3-O-acylglucosamine N-acyltransferase of Rickettsia felis (strain ATCC VR-1525 / URRWXCal2) (Rickettsia azadi).